The chain runs to 429 residues: Glutamate-1-semialdehyde 2,1-aminomutase (429 aa).

Lys265 is subject to N6-(pyridoxal phosphate)lysine.

This sequence belongs to the class-III pyridoxal-phosphate-dependent aminotransferase family. HemL subfamily. As to quaternary structure, homodimer. It depends on pyridoxal 5'-phosphate as a cofactor.

It is found in the cytoplasm. It carries out the reaction (S)-4-amino-5-oxopentanoate = 5-aminolevulinate. It functions in the pathway porphyrin-containing compound metabolism; protoporphyrin-IX biosynthesis; 5-aminolevulinate from L-glutamyl-tRNA(Glu): step 2/2. In Shewanella halifaxensis (strain HAW-EB4), this protein is Glutamate-1-semialdehyde 2,1-aminomutase.